Consider the following 204-residue polypeptide: Guanylate kinase (204 aa).

The region spanning 3 to 181 (GTLYIVSAAS…AVSEMSAIFT (179 aa)) is the Guanylate kinase-like domain. 10–17 (AASGTGKS) is an ATP binding site.

Belongs to the guanylate kinase family.

It is found in the cytoplasm. It carries out the reaction GMP + ATP = GDP + ADP. Its function is as follows. Essential for recycling GMP and indirectly, cGMP. This chain is Guanylate kinase (gmk), found in Xylella fastidiosa (strain 9a5c).